Here is a 201-residue protein sequence, read N- to C-terminus: Probable thymidylate kinase (201 aa).

Residue 10–17 coordinates ATP; it reads GIDGSGKS.

It belongs to the thymidylate kinase family.

The catalysed reaction is dTMP + ATP = dTDP + ADP. The protein is Probable thymidylate kinase of Methanococcoides burtonii (strain DSM 6242 / NBRC 107633 / OCM 468 / ACE-M).